Reading from the N-terminus, the 524-residue chain is Probable beta-1,4-xylosyltransferase IRX14 (524 aa).

Topologically, residues 1 to 51 are cytoplasmic; the sequence is MMKSLLPQSQLRRSAAAASAARSSGGGAGSGGADGAGSDGGAGGRAPATST. The disordered stretch occupies residues 21 to 41; the sequence is ARSSGGGAGSGGADGAGSDGG. The segment covering 24-41 has biased composition (gly residues); sequence SGGGAGSGGADGAGSDGG. Residues 52–71 traverse the membrane as a helical; Signal-anchor for type II membrane protein segment; sequence FWFLLHALCCLVSLFLGFRF. The Lumenal portion of the chain corresponds to 72-524; sequence SRLLFFLLFS…SRSTTKRKEN (453 aa). N-linked (GlcNAc...) asparagine glycosylation is found at Asn-132, Asn-135, Asn-240, and Asn-353. Residues 492-524 are disordered; that stretch reads AELVDSKQDQEGRRLSRTDRSSRSRSTTKRKEN. Residues 495–513 show a composition bias toward basic and acidic residues; that stretch reads VDSKQDQEGRRLSRTDRSS.

It belongs to the glycosyltransferase 43 family.

Its subcellular location is the golgi apparatus membrane. Probable beta-1,4-xylosyltransferase involved in xylan biosynthesis in cell walls. The chain is Probable beta-1,4-xylosyltransferase IRX14 from Oryza sativa subsp. japonica (Rice).